A 137-amino-acid chain; its full sequence is Ciliary microtubule inner protein 1 (137 aa).

As to expression, expressed in airway epithelial cells, renal tubular cells, pancreatic acinar cells and epithelial cells of the stomach, duodenum, and gallbladder (at protein level).

It localises to the cell projection. It is found in the cilium. The chain is Ciliary microtubule inner protein 1 from Homo sapiens (Human).